Consider the following 285-residue polypeptide: Eukaryotic translation initiation factor 3 subunit F-2 (285 aa).

In terms of domain architecture, MPN spans 11 to 145; it reads VFLKPLVLFQ…TRLYCAVEMG (135 aa).

Belongs to the eIF-3 subunit F family. As to quaternary structure, component of the eukaryotic translation initiation factor 3 (eIF-3) complex. The eIF-3 complex interacts with pix.

The protein localises to the cytoplasm. In terms of biological role, component of the eukaryotic translation initiation factor 3 (eIF-3) complex, which is involved in protein synthesis of a specialized repertoire of mRNAs and, together with other initiation factors, stimulates binding of mRNA and methionyl-tRNAi to the 40S ribosome. The eIF-3 complex specifically targets and initiates translation of a subset of mRNAs involved in cell proliferation. The protein is Eukaryotic translation initiation factor 3 subunit F-2 of Drosophila simulans (Fruit fly).